A 769-amino-acid polypeptide reads, in one-letter code: Protein transport protein sec39 (769 aa).

The protein belongs to the SEC39 family. Component of a peripheral membrane protein complex consisting of dsl1, sec39 and tip20.

The protein localises to the endoplasmic reticulum membrane. Required for protein transport between the Golgi and the endoplasmic reticulum. May contribute to tethering of coatomer-coated retrograde transport vesicles to the ER membrane through interaction with and stabilization of the SNARE complex. In Schizosaccharomyces pombe (strain 972 / ATCC 24843) (Fission yeast), this protein is Protein transport protein sec39.